Here is a 572-residue protein sequence, read N- to C-terminus: 2-isopropylmalate synthase (572 aa).

The 275-residue stretch at 31–305 (PIWMSTDLRD…DPGLDFSNIN (275 aa)) folds into the Pyruvate carboxyltransferase domain. Positions 40, 244, 246, and 280 each coordinate Mg(2+). The regulatory domain stretch occupies residues 437-572 (NTAPIHYVGH…MNDAAESVGV (136 aa)).

The protein belongs to the alpha-IPM synthase/homocitrate synthase family. LeuA type 2 subfamily. Homodimer. Mg(2+) serves as cofactor.

The protein resides in the cytoplasm. The catalysed reaction is 3-methyl-2-oxobutanoate + acetyl-CoA + H2O = (2S)-2-isopropylmalate + CoA + H(+). It functions in the pathway amino-acid biosynthesis; L-leucine biosynthesis; L-leucine from 3-methyl-2-oxobutanoate: step 1/4. In terms of biological role, catalyzes the condensation of the acetyl group of acetyl-CoA with 3-methyl-2-oxobutanoate (2-ketoisovalerate) to form 3-carboxy-3-hydroxy-4-methylpentanoate (2-isopropylmalate). In Paraburkholderia phytofirmans (strain DSM 17436 / LMG 22146 / PsJN) (Burkholderia phytofirmans), this protein is 2-isopropylmalate synthase.